The chain runs to 135 residues: Ribosomal RNA large subunit methyltransferase H (135 aa).

Residues leucine 52, glycine 83, and 102–107 (LSSLTL) contribute to the S-adenosyl-L-methionine site.

The protein belongs to the RNA methyltransferase RlmH family. In terms of assembly, homodimer.

Its subcellular location is the cytoplasm. The catalysed reaction is pseudouridine(1915) in 23S rRNA + S-adenosyl-L-methionine = N(3)-methylpseudouridine(1915) in 23S rRNA + S-adenosyl-L-homocysteine + H(+). Specifically methylates the pseudouridine at position 1915 (m3Psi1915) in 23S rRNA. The polypeptide is Ribosomal RNA large subunit methyltransferase H (Polynucleobacter necessarius subsp. necessarius (strain STIR1)).